The following is a 66-amino-acid chain: 14-3-3-like protein 2 (66 aa).

The protein belongs to the 14-3-3 family.

The protein is 14-3-3-like protein 2 of Pseudotsuga menziesii (Douglas-fir).